The primary structure comprises 494 residues: Glucose-6-phosphate 1-dehydrogenase (494 aa).

NADP(+) contacts are provided by Arg46 and Lys150. Substrate contacts are provided by His180, Lys184, Glu218, and Asp237. His242 functions as the Proton acceptor in the catalytic mechanism. Substrate is bound at residue Lys342.

It belongs to the glucose-6-phosphate dehydrogenase family.

The enzyme catalyses D-glucose 6-phosphate + NADP(+) = 6-phospho-D-glucono-1,5-lactone + NADPH + H(+). The protein operates within carbohydrate degradation; pentose phosphate pathway; D-ribulose 5-phosphate from D-glucose 6-phosphate (oxidative stage): step 1/3. In terms of biological role, catalyzes the oxidation of glucose 6-phosphate to 6-phosphogluconolactone. This chain is Glucose-6-phosphate 1-dehydrogenase, found in Aggregatibacter actinomycetemcomitans (Actinobacillus actinomycetemcomitans).